The following is a 356-amino-acid chain: Core protein VP7 (356 aa).

Asn41 carries an N-linked (GlcNAc...) asparagine; by host glycan.

This sequence belongs to the orbivirus VP7 family.

Its subcellular location is the virion. The VP7 protein is one of the five proteins (with VP1, VP3, VP4, and VP6) which form the inner capsid of the virus. The polypeptide is Core protein VP7 (Segment-7) (Broadhaven virus (BRD)).